A 364-amino-acid chain; its full sequence is GDP-perosamine synthase (364 aa).

N6-(pyridoxal phosphate)lysine is present on Lys183.

The protein belongs to the DegT/DnrJ/EryC1 family. As to quaternary structure, homodecamer. It depends on pyridoxal 5'-phosphate as a cofactor.

It carries out the reaction GDP-alpha-D-perosamine + 2-oxoglutarate = GDP-4-dehydro-alpha-D-rhamnose + L-glutamate. It functions in the pathway bacterial outer membrane biogenesis; LPS O-antigen biosynthesis. Its activity is regulated as follows. Divalent ions have no significant effect on activity. Catalyzes the synthesis of GDP-perosamine from GDP-4-keto-6-deoxy-D-mannose and L-glutamate. Can use only L-glutamate as amino donor. The sequence is that of GDP-perosamine synthase from Escherichia coli O157:H7.